We begin with the raw amino-acid sequence, 329 residues long: MQFIDEAKIFIKGGNGGDGCVSFRREKFVPNGGPDGGNGGRGGDIIFIGDRHLNTLINFKFKQHFLAQNGRAGAGNNRTGKSGQNLVLKVPVGTQILSNNKEHVIFDLTKDGQEFIIIRGGKGGLGNTYFKSSINQKPRKNTVGEIGDSMWVWLHLKLLSDVGLVGLPNAGKSTFLSAITSAKPKIADYPFTTLTPNLGVVYINNNSFVVADIPGLIAGAHLGQGLGDKFLKHIERCRIIVHLLDITAENLLQNYYTIRDELSSYSLSLKDKTEILCFTKTDTQSNEVIMSKLLELQPVINRVIYPISSYTKYGIKKLLANILSELQKS.

In terms of domain architecture, Obg spans M1–L159. The region spanning S160 to Q327 is the OBG-type G domain. GTP is bound by residues G166–S173, F191–T195, D212–G215, T279–D282, and S308–Y310. 2 residues coordinate Mg(2+): S173 and T193.

It belongs to the TRAFAC class OBG-HflX-like GTPase superfamily. OBG GTPase family. In terms of assembly, monomer. Mg(2+) serves as cofactor.

It localises to the cytoplasm. Its function is as follows. An essential GTPase which binds GTP, GDP and possibly (p)ppGpp with moderate affinity, with high nucleotide exchange rates and a fairly low GTP hydrolysis rate. Plays a role in control of the cell cycle, stress response, ribosome biogenesis and in those bacteria that undergo differentiation, in morphogenesis control. The protein is GTPase Obg of Orientia tsutsugamushi (strain Ikeda) (Rickettsia tsutsugamushi).